A 141-amino-acid chain; its full sequence is Large ribosomal subunit protein uL11 (141 aa).

It belongs to the universal ribosomal protein uL11 family. Part of the ribosomal stalk of the 50S ribosomal subunit. Interacts with L10 and the large rRNA to form the base of the stalk. L10 forms an elongated spine to which L12 dimers bind in a sequential fashion forming a multimeric L10(L12)X complex. One or more lysine residues are methylated.

Functionally, forms part of the ribosomal stalk which helps the ribosome interact with GTP-bound translation factors. This Limosilactobacillus reuteri (strain DSM 20016) (Lactobacillus reuteri) protein is Large ribosomal subunit protein uL11.